Consider the following 313-residue polypeptide: Antiviral protein I (313 aa).

The signal sequence occupies residues 1–22 (MKSMLVVTISIWLILAPTSTWA). Disulfide bonds link Cys-56-Cys-281 and Cys-107-Cys-128. Tyr-94 is a catalytic residue. Residue Val-95 participates in substrate binding. Substrate is bound at residue Ser-143. Tyr-145 is a catalytic residue. Ser-197 lines the substrate pocket. Residues Glu-198 and Arg-201 contribute to the active site. Residue Arg-201 coordinates substrate. The propeptide occupies 286–313 (NQNAMFPQLIMSTYYNYMVNLGDLFEGF).

The protein belongs to the ribosome-inactivating protein family. Type 1 RIP subfamily. As to quaternary structure, monomer. Expressed in spring leaves (at protein level). Expressed in roots (at protein level).

The catalysed reaction is Endohydrolysis of the N-glycosidic bond at one specific adenosine on the 28S rRNA.. Functionally, possesses antiviral potency. Inhibits viral infection of plants (tobacco mosaic virus). Inhibits protein synthesis. Releases both adenine and guanine from Escherichia coli rRNA in vitro. Activity on guanine is 20 times slower than that on adenine. The sequence is that of Antiviral protein I (PAP1) from Phytolacca americana (American pokeweed).